A 429-amino-acid polypeptide reads, in one-letter code: Tol-Pal system protein TolB (429 aa).

Residues 1–22 (MTRRLFILITIMLCLIPALLHS) form the signal peptide. 2 disordered regions span residues 362–383 (PDGT…RWSP) and 407–429 (GSGQ…SPRW). The segment covering 363-374 (DGTNDTRLTSEG) has biased composition (polar residues).

It belongs to the TolB family. As to quaternary structure, the Tol-Pal system is composed of five core proteins: the inner membrane proteins TolA, TolQ and TolR, the periplasmic protein TolB and the outer membrane protein Pal. They form a network linking the inner and outer membranes and the peptidoglycan layer.

The protein localises to the periplasm. Part of the Tol-Pal system, which plays a role in outer membrane invagination during cell division and is important for maintaining outer membrane integrity. This Geobacter metallireducens (strain ATCC 53774 / DSM 7210 / GS-15) protein is Tol-Pal system protein TolB.